Consider the following 138-residue polypeptide: Basic phospholipase A2 ammodytoxin A (138 aa).

The signal sequence occupies residues 1–16 (MRTLWIVAVCLIGVEG). 7 disulfides stabilise this stretch: Cys42/Cys131, Cys44/Cys60, Cys59/Cys111, Cys65/Cys138, Cys66/Cys104, Cys73/Cys97, and Cys91/Cys102. Residues Tyr43, Gly45, and Gly47 each coordinate Ca(2+). His63 is a catalytic residue. Position 64 (Asp64) interacts with Ca(2+). Asp105 is an active-site residue.

It belongs to the phospholipase A2 family. Group II subfamily. D49 sub-subfamily. Monomer. Binds to calmodulin, coagulation factor X (F10), M-type PLA2 receptor (R-180). May also bind to 14-3-3 proteins gamma (YWHAG) and epsilon (YWHAE), and R25, a mitochondrial membrane protein. It depends on Ca(2+) as a cofactor. In terms of tissue distribution, expressed by the venom gland.

It is found in the secreted. The protein localises to the host cytoplasm. The protein resides in the host cytosol. The catalysed reaction is a 1,2-diacyl-sn-glycero-3-phosphocholine + H2O = a 1-acyl-sn-glycero-3-phosphocholine + a fatty acid + H(+). Snake venom phospholipase A2 (PLA2) that acts as a presynaptic neurotoxin, an inhibitor of blood coagulation, and has been found to bind with high affinity to intracellular proteins. The response of indirectly stimulated neuromuscular preparations to ammodytoxin (Atx) is triphasic. The first phase, the transient inhibition of the acetylcholine (ACh) release, starts soon after the addition of Atx and lasts for several minutes. This phase is probably independent of Atx enzymatic activity. The effect may be due to the specific binding of the toxin to presynaptic receptors. These receptors, called N-type receptors, are still unidentified. It is noteworthy that a neuronal isoform of the M-type PLA2 receptor (R180) has been identified as a high-affinity receptor for Atx in neuronal plasma membranes. It was demonstrated however that this receptor is not essential for expression of neurotoxicity by Atx. The second phase corresponds to an augmentation of neurotransmitter release. A peak is reached 10-20 minutes after exposure of the preparation to Atx and is followed by a gradual reduction. In this phase, the enzymatic activity of Atx of the mammalian is not significant. It is speculated that the increased release of neurotransmitter in this phase is induced by the interference of Atx with voltage-gated potassium channels. Measurements of ionic currents showed however that voltage-gated potassium channels are not affected by Atx. The third phase of the response of neuromuscular preparations to Atx, which corresponds to a complete and irreversible paralysis, is clearly dependent on the hydrolytic activity of the toxin. In addition to its presynaptic neurotoxicity, Atx shows an anticoagulant activity by binding with high affinity to activated coagulation factor X (F10) thus inhibiting the formation of the prothrombinase complex (FX/FV) and its activity (IC(50) is 20 nM). Surprisingly, Atx was discovered to bind intracellular proteins such as calmodulin (CaM) (IC(50) is 6 nM), 14-3-3 proteins gamma (YWHAG) and epsilon (YWHAE) (by similarity with AtxC), as well as R25 (by similarity with AtxC), a mitochondrial integral membrane protein found in cerebral cortex. These findings raised a doubt about the dogma of the exclusively extracellular action of PLA2s, defended by the potential instability of these molecules in the reducing environment of the eukaryotic cytosol coupled with their possible inability to act as enzymes in this cellular compartment, due to too low concentration of calcium ions. This hypothesis was challenged efficiently by demonstrating the internalization of AtxA into a culture cells, but still remains to be directly demonstrated in vivo. PLA2 catalyzes the calcium-dependent hydrolysis of the 2-acyl groups in 3-sn-phosphoglycerides. This chain is Basic phospholipase A2 ammodytoxin A, found in Vipera ammodytes ammodytes (Western sand viper).